The sequence spans 199 residues: MRLTVKQITWLKVCLHLAGFLPLLWLFWAINHGGLSADPVKDIQHFTGRTALKFLLATLLVSPLARYAKQPLLIRTRRLLGLWCFVWATLHLTSYALLELGIHNLALLGSELISRPYLTLGIISWLVLLALTLTSTQFAQRKLGKRWQTLHNVVYLVAILAPIHYLWSVKILSPQPVIYAALALALLALRYRKFRQWWR.

Helical transmembrane passes span 10–30 (WLKV…FWAI), 82–102 (LWCF…ELGI), 116–136 (PYLT…LTST), and 153–173 (VVYL…KILS).

It belongs to the MsrQ family. Heterodimer of a catalytic subunit (MsrP) and a heme-binding subunit (MsrQ). The cofactor is FMN. Requires heme b as cofactor.

The protein localises to the cell inner membrane. Functionally, part of the MsrPQ system that repairs oxidized periplasmic proteins containing methionine sulfoxide residues (Met-O), using respiratory chain electrons. Thus protects these proteins from oxidative-stress damage caused by reactive species of oxygen and chlorine generated by the host defense mechanisms. MsrPQ is essential for the maintenance of envelope integrity under bleach stress, rescuing a wide series of structurally unrelated periplasmic proteins from methionine oxidation, including the primary periplasmic chaperone SurA and the lipoprotein Pal. MsrQ provides electrons for reduction to the reductase catalytic subunit MsrP, using the quinone pool of the respiratory chain. The polypeptide is Protein-methionine-sulfoxide reductase heme-binding subunit MsrQ (Salmonella newport (strain SL254)).